We begin with the raw amino-acid sequence, 67 residues long: Preprofallaxidin-1 (67 aa).

A signal peptide spans 1–22 (MASLKKSLFLVLFLGMVSLSIC). The propeptide occupies 23–46 (DKEKREGENEEEEEEHEEESEEKR). The tract at residues 24 to 46 (KEKREGENEEEEEEHEEESEEKR) is disordered. The segment covering 30–42 (ENEEEEEEHEEES) has biased composition (acidic residues).

In terms of tissue distribution, expressed by the skin glands.

The protein localises to the secreted. Functionally, fallaxidin-4.1 shows antibacterial activity against the Gram-positive bacteria L.lactis (MIC=12 uM), M.luteus (MIC=100 uM), S.epidermidis (MIC=100 uM) and S.uberis (MIC=50 uM). No antibacterial activity against the Gram-positive bacteria B.cereus, E.faecalis, L.innocua, S.aureus, or the Gram-negative bacteria E.cloacae and E.coli. Inhibits the formation of NO by neuronal nitric oxide synthase with an IC(50) of 13.3 uM. The polypeptide is Preprofallaxidin-1 (Litoria fallax (Eastern dwarf tree frog)).